We begin with the raw amino-acid sequence, 176 residues long: MEEQTTQSAADGQTAIELVTGPISDALKARGLPHELTGLDNRKIEIIKVEPEHLIAVARALYDDGFNYLACQCGFDEGPGDSLGSMYHLTKLSDSADRPPEVRIKVFLPRDNPRVPSVYWIWKTADWQERESFDMYGIIYEGHPNLIRILMPEDWVGWPMRKDYVTPDFYELQDAY.

Belongs to the complex I 30 kDa subunit family. As to quaternary structure, NDH-1 can be composed of about 15 different subunits; different subcomplexes with different compositions have been identified which probably have different functions.

It localises to the cell inner membrane. It carries out the reaction a plastoquinone + NADH + (n+1) H(+)(in) = a plastoquinol + NAD(+) + n H(+)(out). The enzyme catalyses a plastoquinone + NADPH + (n+1) H(+)(in) = a plastoquinol + NADP(+) + n H(+)(out). Its function is as follows. NDH-1 shuttles electrons from an unknown electron donor, via FMN and iron-sulfur (Fe-S) centers, to quinones in the respiratory and/or the photosynthetic chain. The immediate electron acceptor for the enzyme in this species is believed to be plastoquinone. Couples the redox reaction to proton translocation, and thus conserves the redox energy in a proton gradient. Cyanobacterial NDH-1 also plays a role in inorganic carbon-concentration. The polypeptide is NAD(P)H-quinone oxidoreductase subunit J (Gloeobacter violaceus (strain ATCC 29082 / PCC 7421)).